The primary structure comprises 445 residues: MAAATDIGTRDVPSQTGKKPWYSILYVQVLIAILIGIVVGWLFPNLATNDWIKALGDGFIKLIKMVIAPIIFCTVVSGIAHIQNASKVGRVGVKALVYFEIVSTFALLLGLIVGNLAPIGHGLAAKPDAAAVANYVKQAEAQKSVDFVLNIIPDSVVGALARGDILQVLLFAILFGFALMALGERGHRLRDIIDDTAHAVFGVIAIVMKAAPVGAFGAMAFTIGKYGPAALGNLIGLIALFYITAGLFVVIVLGLIARFIGFSIFKFVAYIKDELLIVLGTSSSESALPQLMEKLERLGCSKPVVGLVVPTGYSFNLDGTNIYMTLATLFISQALGVDLSFSQQVTILIVAMLTSKGASGVTGAGFITLAATLSVVNPALVPGMAIVFSIDKFMSEVRALTNITGNGIAAVFVSWWEGELDHDLLQRRLNQQIDPSDVETAVTTG.

A run of 8 helical transmembrane segments spans residues 24-44 (ILYV…WLFP), 62-82 (LIKM…IAHI), 96-116 (LVYF…VGNL), 163-183 (GDIL…MALG), 201-221 (FGVI…AMAF), 237-257 (LIAL…GLIA), 334-354 (ALGV…AMLT), and 366-386 (FITL…GMAI).

This sequence belongs to the dicarboxylate/amino acid:cation symporter (DAACS) (TC 2.A.23) family.

The protein resides in the cell inner membrane. In terms of biological role, responsible for the transport of dicarboxylates such as succinate, fumarate, and malate from the periplasm across the membrane. The chain is C4-dicarboxylate transport protein 2 from Bradyrhizobium sp. (strain ORS 278).